The following is a 521-amino-acid chain: MIKQALISVSDKTGIVDFAKALSALGVKLLSTGGTAKLLADAGLPVTEVADYTGFPEMLDGRVKTLHPKVHGGILARRDLPEHMQALEAHGIPTIDLLVVNLYPFVQTIAKDDCTLADAIENIDIGGPTMLRSAAKNHRDVTVVVDPADYAVVLDEMKANGNTLGYKTNFRLATKVFAHTAQYDGAITNYLTSLGDDLQHGSRSAYPATLNLAFDKVQDLRYGENPHQSAAFYRDVATPAGALANYRQLQGKELSYNNIADSDAAWECVKTFDAPACVIIKHANPCGVAVGADAGEAYAKAFQTDPTSAFGGIIAFNREVDEAAAQAVAKQFVEVLIAPSFSDAAKQVFAAKQNVRLLEIALGEGHNAFDLKRVGGGLLVQSLDSKNVQPRELRVVTKRHPTPKEMDDLLFAWRVAKYVKSNAIVFCGNGMTLGVGAGQMSRVDSARIASIKAQNAGLTLAGSAVASDAFFPFRDGLDVVVAAGATCVIQPGGSVRDDEVIAAADEHNIAMVVTGVRHFRH.

In terms of domain architecture, MGS-like spans 1–145 (MIKQALISVS…KNHRDVTVVV (145 aa)).

This sequence belongs to the PurH family.

The enzyme catalyses (6R)-10-formyltetrahydrofolate + 5-amino-1-(5-phospho-beta-D-ribosyl)imidazole-4-carboxamide = 5-formamido-1-(5-phospho-D-ribosyl)imidazole-4-carboxamide + (6S)-5,6,7,8-tetrahydrofolate. It carries out the reaction IMP + H2O = 5-formamido-1-(5-phospho-D-ribosyl)imidazole-4-carboxamide. Its pathway is purine metabolism; IMP biosynthesis via de novo pathway; 5-formamido-1-(5-phospho-D-ribosyl)imidazole-4-carboxamide from 5-amino-1-(5-phospho-D-ribosyl)imidazole-4-carboxamide (10-formyl THF route): step 1/1. It participates in purine metabolism; IMP biosynthesis via de novo pathway; IMP from 5-formamido-1-(5-phospho-D-ribosyl)imidazole-4-carboxamide: step 1/1. This chain is Bifunctional purine biosynthesis protein PurH, found in Burkholderia pseudomallei (strain 1106a).